Here is a 41-residue protein sequence, read N- to C-terminus: Photosystem II reaction center protein L (41 aa).

A helical membrane pass occupies residues 20–40; sequence SLYLGLLLVFVVGLLFSSYFL.

The protein belongs to the PsbL family. As to quaternary structure, PSII is composed of 1 copy each of membrane proteins PsbA, PsbB, PsbC, PsbD, PsbE, PsbF, PsbH, PsbI, PsbJ, PsbK, PsbL, PsbM, PsbT, PsbX, PsbY, PsbZ, Psb30/Ycf12, peripheral proteins PsbO, CyanoQ (PsbQ), PsbU, PsbV and a large number of cofactors. It forms dimeric complexes.

The protein localises to the cellular thylakoid membrane. One of the components of the core complex of photosystem II (PSII). PSII is a light-driven water:plastoquinone oxidoreductase that uses light energy to abstract electrons from H(2)O, generating O(2) and a proton gradient subsequently used for ATP formation. It consists of a core antenna complex that captures photons, and an electron transfer chain that converts photonic excitation into a charge separation. This subunit is found at the monomer-monomer interface and is required for correct PSII assembly and/or dimerization. In Synechococcus sp. (strain JA-2-3B'a(2-13)) (Cyanobacteria bacterium Yellowstone B-Prime), this protein is Photosystem II reaction center protein L.